The chain runs to 267 residues: Undecaprenyl-diphosphatase (267 aa).

Transmembrane regions (helical) follow at residues 1 to 21 (MSLF…FLPI), 40 to 60 (GQAI…LYFW), 85 to 105 (LAFL…FLEV), 112 to 132 (LRSI…LYWA), 189 to 209 (AMLM…AEVI), 219 to 239 (DGAI…TLMF), and 245 to 265 (VSFT…LVIA).

Belongs to the UppP family.

It is found in the cell inner membrane. It carries out the reaction di-trans,octa-cis-undecaprenyl diphosphate + H2O = di-trans,octa-cis-undecaprenyl phosphate + phosphate + H(+). Catalyzes the dephosphorylation of undecaprenyl diphosphate (UPP). Confers resistance to bacitracin. This is Undecaprenyl-diphosphatase from Jannaschia sp. (strain CCS1).